The sequence spans 184 residues: MDSIFKDAEQKMKKALSSLKSELASLRAGRANPSILEGINVDYYGMATPLNQLANISAPEPRLLVVQPYDKSAIEDIEKAILKSDVGLTPNNDGQVIRLAVPQLTEERRNELVKIVRQKGEDTKVVVRNVRRDANDELKKLEKEKEISEDESIRGQDEIQKITDKYIKKIDEVMNAKEEEITSF.

Belongs to the RRF family.

Its subcellular location is the cytoplasm. In terms of biological role, responsible for the release of ribosomes from messenger RNA at the termination of protein biosynthesis. May increase the efficiency of translation by recycling ribosomes from one round of translation to another. In Natranaerobius thermophilus (strain ATCC BAA-1301 / DSM 18059 / JW/NM-WN-LF), this protein is Ribosome-recycling factor.